Consider the following 574-residue polypeptide: Thiol:disulfide interchange protein DsbD (574 aa).

A signal peptide spans 1–19; sequence MAHRILTLILLFCSAHASA. The cysteines at positions 122 and 128 are disulfide-linked. Residues 147–169 form a disordered region; sequence VKANAATPSAATGEQTRVNSDSP. The segment covering 152–169 has biased composition (polar residues); that stretch reads ATPSAATGEQTRVNSDSP. The next 7 membrane-spanning stretches (helical) occupy residues 173–193, 218–238, 253–273, 306–326, 333–353, 367–387, and 399–419; these read LPFS…TPCV, LLAF…GLVV, WVLV…FGLF, IAGL…LLYI, WLGG…LILV, WMEQ…VFLL, and LWSV…LNAT. A disulfide bridge links C192 with C314. A Thioredoxin domain is found at 430–574; it reads LLGAAMICAR…FATHLHNRLR (145 aa). C489 and C492 form a disulfide bridge.

Belongs to the thioredoxin family. DsbD subfamily.

The protein localises to the cell inner membrane. The enzyme catalyses [protein]-dithiol + NAD(+) = [protein]-disulfide + NADH + H(+). It catalyses the reaction [protein]-dithiol + NADP(+) = [protein]-disulfide + NADPH + H(+). Functionally, required to facilitate the formation of correct disulfide bonds in some periplasmic proteins and for the assembly of the periplasmic c-type cytochromes. Acts by transferring electrons from cytoplasmic thioredoxin to the periplasm. This transfer involves a cascade of disulfide bond formation and reduction steps. The chain is Thiol:disulfide interchange protein DsbD from Cronobacter sakazakii (strain ATCC BAA-894) (Enterobacter sakazakii).